The primary structure comprises 64 residues: Short neurotoxin 1 (64 aa).

4 disulfide bridges follow: cysteine 3/cysteine 26, cysteine 20/cysteine 43, cysteine 45/cysteine 56, and cysteine 57/cysteine 62.

Belongs to the three-finger toxin family. Short-chain subfamily. Type I alpha-neurotoxin sub-subfamily. In terms of tissue distribution, expressed by the venom gland.

It is found in the secreted. Functionally, binds to muscle nicotinic acetylcholine receptor (nAChR) and inhibit acetylcholine from binding to the receptor, thereby impairing neuromuscular transmission. The chain is Short neurotoxin 1 from Bungarus fasciatus (Banded krait).